The following is an 86-amino-acid chain: Small ribosomal subunit protein bS18 (86 aa).

The protein belongs to the bacterial ribosomal protein bS18 family. In terms of assembly, part of the 30S ribosomal subunit. Forms a tight heterodimer with protein bS6.

In terms of biological role, binds as a heterodimer with protein bS6 to the central domain of the 16S rRNA, where it helps stabilize the platform of the 30S subunit. This is Small ribosomal subunit protein bS18 from Heliobacterium modesticaldum (strain ATCC 51547 / Ice1).